The chain runs to 188 residues: GMP synthase [glutamine-hydrolyzing] subunit A (188 aa).

The Glutamine amidotransferase type-1 domain occupies 3 to 188 (KVLVVAFGGQ…FQNFVELCKR (186 aa)). Catalysis depends on cysteine 79, which acts as the Nucleophile. Active-site residues include histidine 166 and glutamate 168.

Heterodimer composed of a glutamine amidotransferase subunit (A) and a GMP-binding subunit (B).

It catalyses the reaction XMP + L-glutamine + ATP + H2O = GMP + L-glutamate + AMP + diphosphate + 2 H(+). Its pathway is purine metabolism; GMP biosynthesis; GMP from XMP (L-Gln route): step 1/1. In terms of biological role, catalyzes the synthesis of GMP from XMP. The protein is GMP synthase [glutamine-hydrolyzing] subunit A of Ignicoccus hospitalis (strain KIN4/I / DSM 18386 / JCM 14125).